A 675-amino-acid chain; its full sequence is Alpha-1,4-glucan:maltose-1-phosphate maltosyltransferase (675 aa).

Residues lysine 256, glutamine 316, and aspartate 351 each coordinate alpha-maltose 1-phosphate. Aspartate 386 acts as the Nucleophile in catalysis. Asparagine 387 is a binding site for alpha-maltose 1-phosphate. The active-site Proton donor is the glutamate 415. Residue 525–526 coordinates alpha-maltose 1-phosphate; the sequence is KY.

Belongs to the glycosyl hydrolase 13 family. GlgE subfamily. As to quaternary structure, homodimer.

The catalysed reaction is alpha-maltose 1-phosphate + [(1-&gt;4)-alpha-D-glucosyl](n) = [(1-&gt;4)-alpha-D-glucosyl](n+2) + phosphate. In terms of biological role, maltosyltransferase that uses maltose 1-phosphate (M1P) as the sugar donor to elongate linear or branched alpha-(1-&gt;4)-glucans. Is involved in a branched alpha-glucan biosynthetic pathway from trehalose, together with TreS, Mak and GlgB. The polypeptide is Alpha-1,4-glucan:maltose-1-phosphate maltosyltransferase (Corynebacterium glutamicum (strain ATCC 13032 / DSM 20300 / JCM 1318 / BCRC 11384 / CCUG 27702 / LMG 3730 / NBRC 12168 / NCIMB 10025 / NRRL B-2784 / 534)).